The chain runs to 213 residues: MPTSPWVTLAHIVRPQGRRGEVIAELLTDFPEKFAERRHVFLTRDAASDAAPREMELAGYRLAQNRVVLHFAGIDSIDAAEMLRGLDVVIPESERAPLDQDAAYISDLIGCDVWDEAAGQRVGIVQDVDRQASHVDLLVVDCENGQRAEIPFVKAFLVKLDTTGKRITMRLPEGLLEINASTATAREPRARRTRKRGLRKPITGADATPPDSQ.

The region spanning 99-175 is the PRC barrel domain; it reads DQDAAYISDL…RITMRLPEGL (77 aa). A disordered region spans residues 182–213; that stretch reads TATAREPRARRTRKRGLRKPITGADATPPDSQ. Residues 189 to 199 show a composition bias toward basic residues; that stretch reads RARRTRKRGLR.

This sequence belongs to the RimM family. Binds ribosomal protein uS19.

The protein resides in the cytoplasm. An accessory protein needed during the final step in the assembly of 30S ribosomal subunit, possibly for assembly of the head region. Essential for efficient processing of 16S rRNA. May be needed both before and after RbfA during the maturation of 16S rRNA. It has affinity for free ribosomal 30S subunits but not for 70S ribosomes. The polypeptide is Ribosome maturation factor RimM (Acidobacterium capsulatum (strain ATCC 51196 / DSM 11244 / BCRC 80197 / JCM 7670 / NBRC 15755 / NCIMB 13165 / 161)).